A 119-amino-acid polypeptide reads, in one-letter code: Ribonuclease P protein component (119 aa).

The protein belongs to the RnpA family. In terms of assembly, consists of a catalytic RNA component (M1 or rnpB) and a protein subunit.

The catalysed reaction is Endonucleolytic cleavage of RNA, removing 5'-extranucleotides from tRNA precursor.. RNaseP catalyzes the removal of the 5'-leader sequence from pre-tRNA to produce the mature 5'-terminus. It can also cleave other RNA substrates such as 4.5S RNA. The protein component plays an auxiliary but essential role in vivo by binding to the 5'-leader sequence and broadening the substrate specificity of the ribozyme. This chain is Ribonuclease P protein component, found in Listeria welshimeri serovar 6b (strain ATCC 35897 / DSM 20650 / CCUG 15529 / CIP 8149 / NCTC 11857 / SLCC 5334 / V8).